A 184-amino-acid chain; its full sequence is Small ribosomal subunit protein eS8 (184 aa).

The disordered stretch occupies residues 1 to 23 (MGISRDSRHKRRLTGGRYPVHKK). The span at 7–23 (SRHKRRLTGGRYPVHKK) shows a compositional bias: basic residues.

This sequence belongs to the eukaryotic ribosomal protein eS8 family.

The sequence is that of Small ribosomal subunit protein eS8 (RPS8) from Theileria annulata.